The sequence spans 266 residues: Calpain small subunit 1 (266 aa).

An N-acetylmethionine modification is found at Met-1. Position 6 is a phosphoserine (Ser-6). The region spanning 94 to 128 is the EF-hand 1; atypical domain; it reads EEVRQFRRLFAQLAGDDMEVSATELMNILNKVVTR. Residues Ala-107, Asp-110, Glu-112, Glu-117, Asp-135, Asp-150, Asp-152, Thr-154, Lys-156, and Glu-161 each coordinate Ca(2+). EF-hand domains lie at 137–170, 167–202, 203–231, and 232–266; these read FGLD…NNIK, NNIK…AGFH, LNEH…ISCL, and VRLD…TMYS. Lys-177 is modified (N6-acetyllysine). 6 residues coordinate Ca(2+): Asp-180, Asp-182, Ser-184, Thr-186, Glu-191, and Asp-223.

Homodimer or heterodimer of a large (catalytic) and a small (regulatory) subunit. In presence of calcium, the heterodimer dissociates. Post-translationally, the N-terminus is blocked.

The protein localises to the cytoplasm. It localises to the cell membrane. Its function is as follows. Regulatory subunit of the calcium-regulated non-lysosomal thiol-protease which catalyzes limited proteolysis of substrates involved in cytoskeletal remodeling and signal transduction. Essential for embryonic development. This chain is Calpain small subunit 1 (CAPNS1), found in Oryctolagus cuniculus (Rabbit).